We begin with the raw amino-acid sequence, 100 residues long: MAKVKIKPLEDKILVQAGEAETMTPSGLVIPENAKEKPQEGTVVAVGPGRWDEDGAKRIPVDVSEGDIVIYSKYGGTEIKYNGEEYLILSARDVLAVVSK.

Belongs to the GroES chaperonin family. In terms of assembly, heptamer of 7 subunits arranged in a ring. Interacts with the chaperonin GroEL.

The protein localises to the cytoplasm. In terms of biological role, together with the chaperonin GroEL, plays an essential role in assisting protein folding. The GroEL-GroES system forms a nano-cage that allows encapsulation of the non-native substrate proteins and provides a physical environment optimized to promote and accelerate protein folding. GroES binds to the apical surface of the GroEL ring, thereby capping the opening of the GroEL channel. This Mycobacterium leprae (strain Br4923) protein is Co-chaperonin GroES.